The following is a 355-amino-acid chain: Mu-like prophage FluMu protein gp47 (355 aa).

The protein belongs to the Mu gp47/PBSX XkdT family.

In Haemophilus influenzae (strain ATCC 51907 / DSM 11121 / KW20 / Rd), this protein is Mu-like prophage FluMu protein gp47.